Consider the following 557-residue polypeptide: Glucose-6-phosphate isomerase (557 aa).

The active-site Proton donor is the Glu-359. Residues His-390 and Lys-518 contribute to the active site.

Belongs to the GPI family.

It localises to the cytoplasm. It catalyses the reaction alpha-D-glucose 6-phosphate = beta-D-fructose 6-phosphate. It participates in carbohydrate biosynthesis; gluconeogenesis. The protein operates within carbohydrate degradation; glycolysis; D-glyceraldehyde 3-phosphate and glycerone phosphate from D-glucose: step 2/4. Functionally, catalyzes the reversible isomerization of glucose-6-phosphate to fructose-6-phosphate. This Hahella chejuensis (strain KCTC 2396) protein is Glucose-6-phosphate isomerase.